The chain runs to 349 residues: Peptide transport system ATP-binding protein SapD (349 aa).

The 259-residue stretch at 1–259 (MALLDICNLN…PHHPYTQALI (259 aa)) folds into the ABC transporter domain. 40–47 (GESGSGKS) serves as a coordination point for ATP.

It belongs to the ABC transporter superfamily.

The protein localises to the cell inner membrane. In terms of biological role, involved in a peptide intake transport system that plays a role in the resistance to antimicrobial peptides. In Haemophilus influenzae (strain ATCC 51907 / DSM 11121 / KW20 / Rd), this protein is Peptide transport system ATP-binding protein SapD (sapD).